The primary structure comprises 398 residues: Aurofusarin biosynthesis regulatory protein aurR1 (398 aa).

The segment at residues 18-45 (CDNCAKSKVRCGKEQPWCQRCERRGQVC) is a DNA-binding region (zn(2)-C6 fungal-type). Disordered stretches follow at residues 52–73 (RSRK…GTPP) and 275–314 (AATI…SSLI). Composition is skewed to basic and acidic residues over residues 56–67 (RTLDAAHPESDQ) and 289–298 (DGKDTERSVS). Polar residues predominate over residues 299–311 (RDTNVSQDGSEPS).

It localises to the nucleus. Its function is as follows. Transcription factor that specifically regulates the expression of the gene cluster that mediates the biosynthesis of aurofusarin, a red mycelium pigment which is acting as a mycotoxin. The chain is Aurofusarin biosynthesis regulatory protein aurR1 from Gibberella zeae (strain ATCC MYA-4620 / CBS 123657 / FGSC 9075 / NRRL 31084 / PH-1) (Wheat head blight fungus).